The chain runs to 172 residues: Ribosome maturation factor RimM (172 aa).

Residues 96 to 168 (DGEFYYHEII…RIEVELMEGL (73 aa)) enclose the PRC barrel domain.

This sequence belongs to the RimM family. Binds ribosomal protein uS19.

The protein resides in the cytoplasm. Functionally, an accessory protein needed during the final step in the assembly of 30S ribosomal subunit, possibly for assembly of the head region. Essential for efficient processing of 16S rRNA. May be needed both before and after RbfA during the maturation of 16S rRNA. It has affinity for free ribosomal 30S subunits but not for 70S ribosomes. This chain is Ribosome maturation factor RimM, found in Streptococcus thermophilus (strain CNRZ 1066).